Consider the following 707-residue polypeptide: Protein kinase C theta type (707 aa).

The 107-residue stretch at methionine 1–leucine 107 folds into the C2 domain. Tyrosine 90 carries the post-translational modification Phosphotyrosine; by LCK. The Phorbol-ester/DAG-type 1 zinc finger occupies cysteine 159–cysteine 209. Threonine 219 bears the Phosphothreonine; by autocatalysis mark. Residues proline 231–cysteine 281 form a Phorbol-ester/DAG-type 2 zinc finger. At serine 348 the chain carries Phosphoserine. The 255-residue stretch at phenylalanine 380 to phenylalanine 634 folds into the Protein kinase domain. ATP is bound by residues leucine 386–valine 394 and lysine 409. The active-site Proton acceptor is the aspartate 504. The residue at position 538 (threonine 538) is a Phosphothreonine; by PDPK1. Positions arginine 635–cysteine 706 constitute an AGC-kinase C-terminal domain. Residues serine 676 and serine 685 each carry the phosphoserine modification. Serine 695 carries the post-translational modification Phosphoserine; by autocatalysis.

Belongs to the protein kinase superfamily. AGC Ser/Thr protein kinase family. PKC subfamily. Part of a membrane raft complex composed at least of BCL10, CARD11, MALT1 and IKBKB. Interacts with GLRX3 (via N-terminus). Interacts with ECT2. Interacts with CCDC88A/GIV; the interaction leads to phosphorylation of CCDC88A and inhibition of its guanine nucleotide exchange factor activity. Interacts with CD28. It depends on Mg(2+) as a cofactor. Post-translationally, autophosphorylation at Thr-219 is required for targeting to the TCR and cellular function of PRKCQ upon antigen receptor ligation. Following TCR stimulation, phosphorylated at Tyr-90 and Ser-685.

Its subcellular location is the cytoplasm. The protein localises to the cell membrane. It catalyses the reaction L-seryl-[protein] + ATP = O-phospho-L-seryl-[protein] + ADP + H(+). It carries out the reaction L-threonyl-[protein] + ATP = O-phospho-L-threonyl-[protein] + ADP + H(+). Novel PKCs (PRKCD, PRKCE, PRKCH and PRKCQ) are calcium-insensitive, but activated by diacylglycerol (DAG) and phosphatidylserine. Three specific sites; Thr-538 (activation loop of the kinase domain), Ser-676 (turn motif) and Ser-695 (hydrophobic region), need to be phosphorylated for its full activation. Its function is as follows. Calcium-independent, phospholipid- and diacylglycerol (DAG)-dependent serine/threonine-protein kinase that mediates non-redundant functions in T-cell receptor (TCR) signaling, including T-cells activation, proliferation, differentiation and survival, by mediating activation of multiple transcription factors such as NF-kappa-B, JUN, NFATC1 and NFATC2. In TCR-CD3/CD28-co-stimulated T-cells, is required for the activation of NF-kappa-B and JUN, which in turn are essential for IL2 production, and participates in the calcium-dependent NFATC1 and NFATC2 transactivation. Mediates the activation of the canonical NF-kappa-B pathway (NFKB1) by direct phosphorylation of CARD11 on several serine residues, inducing CARD11 association with lipid rafts and recruitment of the BCL10-MALT1 complex, which then activates IKK complex, resulting in nuclear translocation and activation of NFKB1. May also play an indirect role in activation of the non-canonical NF-kappa-B (NFKB2) pathway. In the signaling pathway leading to JUN activation, acts by phosphorylating the mediator STK39/SPAK and may not act through MAP kinases signaling. Plays a critical role in TCR/CD28-induced NFATC1 and NFATC2 transactivation by participating in the regulation of reduced inositol 1,4,5-trisphosphate generation and intracellular calcium mobilization. After costimulation of T-cells through CD28 can phosphorylate CBLB and is required for the ubiquitination and subsequent degradation of CBLB, which is a prerequisite for the activation of TCR. During T-cells differentiation, plays an important role in the development of T-helper 2 (Th2) cells following immune and inflammatory responses, and, in the development of inflammatory autoimmune diseases, is necessary for the activation of IL17-producing Th17 cells. May play a minor role in Th1 response. Upon TCR stimulation, mediates T-cell protective survival signal by phosphorylating BAD, thus protecting T-cells from BAD-induced apoptosis, and by up-regulating BCL-X(L)/BCL2L1 levels through NF-kappa-B and JUN pathways. In platelets, regulates signal transduction downstream of the ITGA2B, CD36/GP4, F2R/PAR1 and F2RL3/PAR4 receptors, playing a positive role in 'outside-in' signaling and granule secretion signal transduction. May relay signals from the activated ITGA2B receptor by regulating the uncoupling of WASP and WIPF1, thereby permitting the regulation of actin filament nucleation and branching activity of the Arp2/3 complex. May mediate inhibitory effects of free fatty acids on insulin signaling by phosphorylating IRS1, which in turn blocks IRS1 tyrosine phosphorylation and downstream activation of the PI3K/AKT pathway. Phosphorylates MSN (moesin) in the presence of phosphatidylglycerol or phosphatidylinositol. Phosphorylates PDPK1 at 'Ser-504' and 'Ser-532' and negatively regulates its ability to phosphorylate PKB/AKT1. Phosphorylates CCDC88A/GIV and inhibits its guanine nucleotide exchange factor activity. Phosphorylates and activates LRRK1, which phosphorylates RAB proteins involved in intracellular trafficking. This Rattus norvegicus (Rat) protein is Protein kinase C theta type (Prkcq).